We begin with the raw amino-acid sequence, 168 residues long: Putative flavin-containing monooxygenase FMO GS-OX-like 11 (168 aa).

17 to 22 is a binding site for FAD; it reads GAGAAG.

This sequence belongs to the FMO family. FAD serves as cofactor.

Catalyzes the conversion of methylthioalkyl glucosinolates of any chain length into methylsulfinylalkyl glucosinolates. The protein is Putative flavin-containing monooxygenase FMO GS-OX-like 11 of Arabidopsis thaliana (Mouse-ear cress).